The following is a 409-amino-acid chain: Probable beta-1,3-galactosyltransferase 3 (409 aa).

A helical; Signal-anchor for type II membrane protein transmembrane segment spans residues 20–42; sequence WTFLLCFGSFCFGILFTDRMWII.

Belongs to the glycosyltransferase 31 family. Mn(2+) serves as cofactor.

The protein localises to the golgi apparatus membrane. It functions in the pathway protein modification; protein glycosylation. Beta-1,3-galactosyltransferase that transfers galactose from UDP-galactose to substrates with a terminal glycosyl residue. The protein is Probable beta-1,3-galactosyltransferase 3 (B3GALT3) of Arabidopsis thaliana (Mouse-ear cress).